Reading from the N-terminus, the 426-residue chain is Tyrosine--tRNA ligase (426 aa).

Tyr38 lines the L-tyrosine pocket. The 'HIGH' region motif lies at 43–52 (PTADSLHIGS). L-tyrosine contacts are provided by Tyr176 and Gln180. The short motif at 236–240 (KFGKT) is the 'KMSKS' region element. Lys239 contributes to the ATP binding site. The region spanning 359–426 (QTIVEVLTQS…KKLFNLYIWK (68 aa)) is the S4 RNA-binding domain.

The protein belongs to the class-I aminoacyl-tRNA synthetase family. TyrS type 1 subfamily. In terms of assembly, homodimer.

Its subcellular location is the cytoplasm. The catalysed reaction is tRNA(Tyr) + L-tyrosine + ATP = L-tyrosyl-tRNA(Tyr) + AMP + diphosphate + H(+). Catalyzes the attachment of tyrosine to tRNA(Tyr) in a two-step reaction: tyrosine is first activated by ATP to form Tyr-AMP and then transferred to the acceptor end of tRNA(Tyr). The sequence is that of Tyrosine--tRNA ligase from Aliivibrio fischeri (strain ATCC 700601 / ES114) (Vibrio fischeri).